Consider the following 367-residue polypeptide: Aminomethyltransferase (367 aa).

The protein belongs to the GcvT family. In terms of assembly, the glycine cleavage system is composed of four proteins: P, T, L and H.

The enzyme catalyses N(6)-[(R)-S(8)-aminomethyldihydrolipoyl]-L-lysyl-[protein] + (6S)-5,6,7,8-tetrahydrofolate = N(6)-[(R)-dihydrolipoyl]-L-lysyl-[protein] + (6R)-5,10-methylene-5,6,7,8-tetrahydrofolate + NH4(+). The glycine cleavage system catalyzes the degradation of glycine. The protein is Aminomethyltransferase of Mycobacterium bovis (strain ATCC BAA-935 / AF2122/97).